A 454-amino-acid polypeptide reads, in one-letter code: 5-hydroxytryptamine receptor 3D (454 aa).

Positions 1-24 (MQKHSPGPPALALLSQSLLTTGNG) are cleaved as a signal peptide. At 25 to 232 (DTLIINCPGF…IRRRCRPSPY (208 aa)) the chain is on the extracellular side. Asparagine 66 is a glycosylation site (N-linked (GlcNAc...) asparagine). A helical transmembrane segment spans residues 233–253 (VVNFLVPSGILIAIDALSFYL). At 254-264 (PLESGNCAPFK) the chain is on the cytoplasmic side. Residues 265–285 (MTVLLGYSVFLLMMNDLLPAT) form a helical membrane-spanning segment. Residues 286 to 306 (STSSHASLVAPLALMQTPLPA) are Extracellular-facing. Residues 307–327 (GVYFALCLSLMVGSLLETIFI) traverse the membrane as a helical segment. The Cytoplasmic segment spans residues 328–431 (THLLHVATTQ…WVQFSHAMDA (104 aa)). The disordered stretch occupies residues 363-410 (PQKGNKGPGLTPTHLPGVKEPEVSAGQMPGPGEAELTGGSEWTRAQRE). The tract at residues 399-430 (TGGSEWTRAQREHEAQKQHSVELWVQFSHAMD) is HA-stretch; determines single-channel conductance in 5-HT3 receptors. A helical membrane pass occupies residues 432 to 452 (LLFRLYLLFMASSIITVICLW). Over 453-454 (NT) the chain is Extracellular.

This sequence belongs to the ligand-gated ion channel (TC 1.A.9) family. 5-hydroxytryptamine receptor (TC 1.A.9.2) subfamily. HTR3D sub-subfamily. As to quaternary structure, forms homopentameric as well as heteropentameric serotonin-activated cation-selective channel complexes with HTR3A. The homomeric complex is not functional. Heteropentameric complexes display properties which resemble that of neuronal serotonin-activated channels in vivo. Expressed in liver, as well as fetal and adult colon and kidney.

It localises to the postsynaptic cell membrane. It is found in the cell membrane. The catalysed reaction is Na(+)(in) = Na(+)(out). The enzyme catalyses K(+)(in) = K(+)(out). It carries out the reaction Ca(2+)(in) = Ca(2+)(out). Its function is as follows. Forms serotonin (5-hydroxytryptamine/5-HT3)-activated cation-selective channel complexes, which when activated cause fast, depolarizing responses in neurons. The polypeptide is 5-hydroxytryptamine receptor 3D (Homo sapiens (Human)).